Reading from the N-terminus, the 145-residue chain is MSLAEFDADVVVDARDCIMGRVASNVAERALAGDRVAVVNAEQAVITGTEDDVFSTYRTRANLGSDRGPYYPKRPDGIFKRAIRGMLPYKQDDGREALDSVRVYVGNPMDEDGDVLDGTSLDRLSTIRFVTLSEVSEELGANVTW.

It belongs to the universal ribosomal protein uL13 family. In terms of assembly, part of the 50S ribosomal subunit.

In terms of biological role, this protein is one of the early assembly proteins of the 50S ribosomal subunit, although it is not seen to bind rRNA by itself. It is important during the early stages of 50S assembly. The sequence is that of Large ribosomal subunit protein uL13 from Halobacterium salinarum (strain ATCC 700922 / JCM 11081 / NRC-1) (Halobacterium halobium).